Reading from the N-terminus, the 138-residue chain is MSLKLYFKITNELECHRGFQYKDGLNILKGEFNGDPKDFCVPGRLYFCEPKDIHHYLHFGIHLREVYLPIDNPDFKMVINRLKIYGANMIILGKKYYLKDLDTWKYMIECGLDIHLNENEPLKCAISNGYLEIVGKLL.

This is an uncharacterized protein from Acanthamoeba polyphaga mimivirus (APMV).